The following is a 274-amino-acid chain: Dermonecrotic toxin SdSicTox-betaIIB1bv (274 aa).

H5 is an active-site residue. Residues E25 and D27 each contribute to the Mg(2+) site. H41 serves as the catalytic Nucleophile. Cystine bridges form between C45–C51 and C47–C190. D85 is a binding site for Mg(2+).

The protein belongs to the arthropod phospholipase D family. Class II subfamily. Mg(2+) is required as a cofactor. Expressed by the venom gland.

The protein localises to the secreted. The enzyme catalyses an N-(acyl)-sphingosylphosphocholine = an N-(acyl)-sphingosyl-1,3-cyclic phosphate + choline. The catalysed reaction is an N-(acyl)-sphingosylphosphoethanolamine = an N-(acyl)-sphingosyl-1,3-cyclic phosphate + ethanolamine. It carries out the reaction a 1-acyl-sn-glycero-3-phosphocholine = a 1-acyl-sn-glycero-2,3-cyclic phosphate + choline. It catalyses the reaction a 1-acyl-sn-glycero-3-phosphoethanolamine = a 1-acyl-sn-glycero-2,3-cyclic phosphate + ethanolamine. In terms of biological role, dermonecrotic toxins cleave the phosphodiester linkage between the phosphate and headgroup of certain phospholipids (sphingolipid and lysolipid substrates), forming an alcohol (often choline) and a cyclic phosphate. This toxin acts on sphingomyelin (SM). It may also act on ceramide phosphoethanolamine (CPE), lysophosphatidylcholine (LPC) and lysophosphatidylethanolamine (LPE), but not on lysophosphatidylserine (LPS), and lysophosphatidylglycerol (LPG). It acts by transphosphatidylation, releasing exclusively cyclic phosphate products as second products. Induces dermonecrosis, hemolysis, increased vascular permeability, edema, inflammatory response, and platelet aggregation. The chain is Dermonecrotic toxin SdSicTox-betaIIB1bv from Sicarius cf. damarensis (strain GJB-2008) (Six-eyed sand spider).